Consider the following 186-residue polypeptide: Ion-translocating oxidoreductase complex subunit B (186 aa).

Residues 1-23 (MLTPILALTALALIAGALLGFAA) form a hydrophobic region. The region spanning 29-88 (EGNPIADQVDAVLPQTQCGQCGFGGCRPYAEAIAAGEAEINRCPPGGQDTVQTLADLLGV) is the 4Fe-4S domain. [4Fe-4S] cluster-binding residues include Cys46, Cys49, Cys54, Cys71, Cys114, Cys117, Cys120, Cys124, Cys144, Cys147, Cys150, and Cys154. 4Fe-4S ferredoxin-type domains follow at residues 105 to 134 (QVAW…GAAK) and 135 to 164 (QMHT…MVPV).

It belongs to the 4Fe4S bacterial-type ferredoxin family. RnfB subfamily. In terms of assembly, the complex is composed of six subunits: RnfA, RnfB, RnfC, RnfD, RnfE and RnfG. The cofactor is [4Fe-4S] cluster.

The protein resides in the cell inner membrane. In terms of biological role, part of a membrane-bound complex that couples electron transfer with translocation of ions across the membrane. The protein is Ion-translocating oxidoreductase complex subunit B of Alkalilimnicola ehrlichii (strain ATCC BAA-1101 / DSM 17681 / MLHE-1).